A 588-amino-acid chain; its full sequence is Intracellular maltogenic amylase (588 aa).

Asn149, Ser155, Gly174, and Asp176 together coordinate Ca(2+). Substrate contacts are provided by His249 and Arg325. Asp327 serves as the catalytic Nucleophile. Glu356 acts as the Proton donor in catalysis. Substrate-binding positions include 422–423 (HD), Asp467, and Arg471.

This sequence belongs to the glycosyl hydrolase 13 family. BbmA subfamily. Monomer or homodimer; in equilibrium. It depends on Ca(2+) as a cofactor.

It is found in the cytoplasm. Hydrolyzes beta-cyclodextrin to maltose and glucose, soluble starch to maltose and glucose, and pullulan to panose with trace amounts of maltose and glucose. It is also able to hydrolyze acarbose. Can also exhibit a transglycosylation activity transferring glucose or maltose to another moiety of sugars by forming alpha-(1,6)- and alpha-(1,3)-glycosidic linkages upon the hydrolysis of substrate at concentrations of 5% or higher. This Bacillus subtilis protein is Intracellular maltogenic amylase (bbmA).